Here is a 487-residue protein sequence, read N- to C-terminus: Probable cytochrome P450 313a5 (487 aa).

A Phosphotyrosine modification is found at Tyr-223. Residue Cys-433 coordinates heme.

The protein belongs to the cytochrome P450 family. Heme serves as cofactor.

It localises to the endoplasmic reticulum membrane. The protein resides in the microsome membrane. In terms of biological role, may be involved in the metabolism of insect hormones and in the breakdown of synthetic insecticides. This is Probable cytochrome P450 313a5 (Cyp313a5) from Drosophila melanogaster (Fruit fly).